Consider the following 138-residue polypeptide: Small ribosomal subunit protein uS11c (138 aa).

The segment at 1-24 (MAKPIPKVGSRRNGRSSARKSARR) is disordered. A compositionally biased stretch (basic residues) spans 9–24 (GSRRNGRSSARKSARR).

It belongs to the universal ribosomal protein uS11 family. In terms of assembly, part of the 30S ribosomal subunit.

Its subcellular location is the plastid. The protein localises to the chloroplast. The polypeptide is Small ribosomal subunit protein uS11c (Gossypium hirsutum (Upland cotton)).